We begin with the raw amino-acid sequence, 1012 residues long: Beta-alanine-activating enzyme (1012 aa).

Residues 177–185 (TTGTTGKPK), Asp-411, Arg-426, and Lys-516 each bind ATP.

Belongs to the ATP-dependent AMP-binding enzyme family.

In terms of biological role, covalently binds beta-alanine in an ATP-dependent manner to form a thioester bond with its phosphopantetheine group and transfers it to an, as yet, unknown acceptor. May be required for a post-translational protein modification or for post-transcriptional modification of an RNA. The sequence is that of Beta-alanine-activating enzyme from Drosophila melanogaster (Fruit fly).